A 288-amino-acid chain; its full sequence is Bis(5'-nucleosyl)-tetraphosphatase, symmetrical (288 aa).

The protein belongs to the Ap4A hydrolase family.

The catalysed reaction is P(1),P(4)-bis(5'-adenosyl) tetraphosphate + H2O = 2 ADP + 2 H(+). Functionally, hydrolyzes diadenosine 5',5'''-P1,P4-tetraphosphate to yield ADP. This is Bis(5'-nucleosyl)-tetraphosphatase, symmetrical from Pseudomonas putida (strain GB-1).